The sequence spans 143 residues: UPF0201 protein PAE1632 (143 aa).

Belongs to the UPF0201 family.

This is UPF0201 protein PAE1632 from Pyrobaculum aerophilum (strain ATCC 51768 / DSM 7523 / JCM 9630 / CIP 104966 / NBRC 100827 / IM2).